A 272-amino-acid chain; its full sequence is NADH-cytochrome b5 reductase 3 (272 aa).

The FAD-binding FR-type domain maps to 11-123; that stretch reads DIKYPLRLID…RGPNGLLVYQ (113 aa). At Lys-13 the chain carries N6-acetyllysine. A Phosphotyrosine modification is found at Tyr-14. Lys-21 carries the post-translational modification N6-acetyllysine. FAD is bound by residues Arg-63, Pro-64, Tyr-65, Val-80, Lys-82, and Tyr-84. Residue Lys-91 is modified to N6-acetyllysine. FAD contacts are provided by Lys-97, Met-98, Ser-99, and Thr-156.

The protein belongs to the flavoprotein pyridine nucleotide cytochrome reductase family. Component of a complex composed of cytochrome b5, NADH-cytochrome b5 reductase (CYB5R3) and MTARC2. Interacts with MTLN; the interaction is required to maintain cellular lipid composition and leads to stimulation of mitochondrial respiratory complex I activity. It depends on FAD as a cofactor.

The protein resides in the endoplasmic reticulum membrane. Its subcellular location is the mitochondrion outer membrane. It catalyses the reaction 2 Fe(III)-[cytochrome b5] + NADH = 2 Fe(II)-[cytochrome b5] + NAD(+) + H(+). In terms of biological role, catalyzes the reduction of two molecules of cytochrome b5 using NADH as the electron donor. The chain is NADH-cytochrome b5 reductase 3 (CYB5R3) from Sus scrofa (Pig).